The chain runs to 211 residues: Intermembrane phospholipid transport system binding protein MlaC (211 aa).

Positions 1-21 are cleaved as a signal peptide; it reads MFKRLMMVALLVIAPLSAATA.

The protein belongs to the MlaC/ttg2D family. Interacts with the MlaA-OmpF outer membrane complex and with the inner membrane ABC transporter complex MlaFEDB, via direct interaction with MlaD.

It is found in the periplasm. In terms of biological role, involved in a phospholipid transport pathway that maintains lipid asymmetry in the outer membrane by retrograde trafficking of phospholipids from the outer membrane to the inner membrane. May transfer phospholipid across the periplasmic space and deliver it to the MlaFEDB complex at the inner membrane. The chain is Intermembrane phospholipid transport system binding protein MlaC from Escherichia coli (strain K12).